The sequence spans 503 residues: Podocalyxin (503 aa).

The first 21 residues, Met1–Ser21, serve as a signal peptide directing secretion. The tract at residues Ser19 to Thr236 is disordered. A compositionally biased stretch (polar residues) spans His20 to Thr50. Residues His22 to Ser404 are Extracellular-facing. Asn25, Asn89, and Asn94 each carry an N-linked (GlcNAc...) asparagine glycan. Residues Ser61–Ser91 show a composition bias toward low complexity. Positions Thr107–Gly126 are enriched in low complexity. Positions Asp131–Ser183 are enriched in polar residues. N-linked (GlcNAc...) asparagine glycans are attached at residues Asn145, Asn154, Asn167, and Asn206. Over residues Ser196–Thr208 the composition is skewed to low complexity. The segment covering Ser222–Thr236 has biased composition (polar residues). N-linked (GlcNAc...) asparagine glycosylation is present at Asn303. The helical transmembrane segment at Leu405 to Tyr425 threads the bilayer. The Cytoplasmic portion of the chain corresponds to Gly426–Leu503. Thr463 carries the post-translational modification Phosphothreonine. Ser482 carries the post-translational modification Phosphoserine. Thr501 carries the phosphothreonine modification.

The protein belongs to the podocalyxin family. Monomer; when associated with the membrane raft. Oligomer; when integrated in the apical membrane. Found in a complex with EZR, PODXL and NHERF2. Associates with the actin cytoskeleton through complex formation with EZR and NHERF2. Interacts (via the C-terminal PDZ-binding motif DTHL) with NHERF1 (via the PDZ domains); interaction is not detected in glomerular epithelium cells, take place early in the secretory pathway and is necessary for its apical membrane sorting. Interacts (via the C-terminal PDZ-binding motif DTHL) with NHERF2 (via the PDZ 1 domain); interaction is detected in glomerular epithelium cells. Interacts with EZR. Post-translationally, N- and O-linked glycosylated. Sialoglycoprotein. As to expression, expressed in liver cells and hematopoietic cells (at protein level). Glomerular epithelium cell (podocyte).

It localises to the apical cell membrane. The protein resides in the cell projection. The protein localises to the microvillus. Its subcellular location is the membrane raft. It is found in the lamellipodium. It localises to the filopodium. The protein resides in the ruffle. The protein localises to the membrane. In terms of biological role, involved in the regulation of both adhesion and cell morphology and cancer progression. Functions as an anti-adhesive molecule that maintains an open filtration pathway between neighboring foot processes in the podocyte by charge repulsion. Acts as a pro-adhesive molecule, enhancing the adherence of cells to immobilized ligands, increasing the rate of migration and cell-cell contacts in an integrin-dependent manner. Induces the formation of apical actin-dependent microvilli. Involved in the formation of a preapical plasma membrane subdomain to set up initial epithelial polarization and the apical lumen formation during renal tubulogenesis. Plays a role in cancer development and aggressiveness by inducing cell migration and invasion through its interaction with the actin-binding protein EZR. Affects EZR-dependent signaling events, leading to increased activities of the MAPK and PI3K pathways in cancer cells. The protein is Podocalyxin (Podxl) of Mus musculus (Mouse).